The primary structure comprises 515 residues: Bifunctional purine biosynthesis protein PurH (515 aa).

Positions 1 to 145 (MTKRALISVS…KNHASVTVVV (145 aa)) constitute an MGS-like domain.

This sequence belongs to the PurH family.

The enzyme catalyses (6R)-10-formyltetrahydrofolate + 5-amino-1-(5-phospho-beta-D-ribosyl)imidazole-4-carboxamide = 5-formamido-1-(5-phospho-D-ribosyl)imidazole-4-carboxamide + (6S)-5,6,7,8-tetrahydrofolate. It catalyses the reaction IMP + H2O = 5-formamido-1-(5-phospho-D-ribosyl)imidazole-4-carboxamide. The protein operates within purine metabolism; IMP biosynthesis via de novo pathway; 5-formamido-1-(5-phospho-D-ribosyl)imidazole-4-carboxamide from 5-amino-1-(5-phospho-D-ribosyl)imidazole-4-carboxamide (10-formyl THF route): step 1/1. Its pathway is purine metabolism; IMP biosynthesis via de novo pathway; IMP from 5-formamido-1-(5-phospho-D-ribosyl)imidazole-4-carboxamide: step 1/1. The chain is Bifunctional purine biosynthesis protein PurH from Streptococcus suis (strain 98HAH33).